The sequence spans 559 residues: Heterochromatin protein 1-binding protein 3 (559 aa).

Residues 1 to 132 (MATDLSEAEP…SKEKEKKVKK (132 aa)) form a disordered region. Basic and acidic residues-rich tracts occupy residues 51-68 (TPPK…KADA) and 96-128 (EQPK…EKEK). H15 domains are found at residues 158-233 (SRPK…VVVS), 256-331 (QQVK…QLKK), and 339-414 (GGTL…QLCF). Residues 256 to 260 (QQVKL) carry the PxVxL motif motif. The tract at residues 421–559 (DVLYPEKQQD…AMRKSLRAKK (139 aa)) is disordered. A compositionally biased stretch (acidic residues) spans 429 to 459 (QDEDSEESQEEEEEESEEEEESEEEESEEEE). Residues 463-515 (KKRMQKRPPPKSRSRAPPMKRRESKPKPRKTPAAHQGKAKPPPKVKTPVKKAK) show a composition bias toward basic residues. A compositionally biased stretch (low complexity) spans 516 to 533 (PAAPAIKKPSGGSSSKKP). The segment covering 549 to 559 (SAMRKSLRAKK) has biased composition (basic residues).

It localises to the nucleus. It is found in the chromosome. Component of heterochromatin that maintains heterochromatin integrity during G1/S progression and regulates the duration of G1 phase to critically influence cell proliferative capacity. The polypeptide is Heterochromatin protein 1-binding protein 3 (HP1BP3) (Gallus gallus (Chicken)).